Consider the following 142-residue polypeptide: Large ribosomal subunit protein mL42 (142 aa).

A mitochondrion-targeting transit peptide spans 1–32; that stretch reads MALAAVKWAISSRTMLKHLFPVENGALYCVGH.

It belongs to the mitochondrion-specific ribosomal protein mL42 family. In terms of assembly, component of the mitochondrial ribosome large subunit (39S) which comprises a 16S rRNA and about 50 distinct proteins. Component of the mitochondrial ribosome small subunit (28S) which comprises a 12S rRNA and about 30 distinct proteins.

It is found in the mitochondrion. The protein is Large ribosomal subunit protein mL42 (MRPL42) of Bos taurus (Bovine).